The sequence spans 498 residues: Glycerol kinase (498 aa).

Thr-12 is an ADP binding site. ATP contacts are provided by Thr-12, Thr-13, and Ser-14. Thr-12 is a binding site for sn-glycerol 3-phosphate. Arg-16 serves as a coordination point for ADP. 3 residues coordinate sn-glycerol 3-phosphate: Arg-82, Glu-83, and Tyr-134. Arg-82, Glu-83, and Tyr-134 together coordinate glycerol. A Phosphohistidine; by HPr modification is found at His-230. Position 244 (Asp-244) interacts with sn-glycerol 3-phosphate. Glycerol contacts are provided by Asp-244 and Gln-245. Thr-266 and Gly-309 together coordinate ADP. 4 residues coordinate ATP: Thr-266, Gly-309, Gln-313, and Gly-410. Residues Gly-410 and Asn-414 each contribute to the ADP site.

It belongs to the FGGY kinase family. Homotetramer and homodimer (in equilibrium). In terms of processing, the phosphoenolpyruvate-dependent sugar phosphotransferase system (PTS), including enzyme I, and histidine-containing protein (HPr) are required for the phosphorylation, which leads to the activation of the enzyme.

It catalyses the reaction glycerol + ATP = sn-glycerol 3-phosphate + ADP + H(+). It participates in polyol metabolism; glycerol degradation via glycerol kinase pathway; sn-glycerol 3-phosphate from glycerol: step 1/1. With respect to regulation, activated by phosphorylation and inhibited by fructose 1,6-bisphosphate (FBP). Functionally, key enzyme in the regulation of glycerol uptake and metabolism. Catalyzes the phosphorylation of glycerol to yield sn-glycerol 3-phosphate. The protein is Glycerol kinase of Staphylococcus aureus (strain MRSA252).